We begin with the raw amino-acid sequence, 122 residues long: Large ribosomal subunit protein uL18 (122 aa).

The protein belongs to the universal ribosomal protein uL18 family. As to quaternary structure, part of the 50S ribosomal subunit; part of the 5S rRNA/L5/L18/L25 subcomplex. Contacts the 5S and 23S rRNAs.

Its function is as follows. This is one of the proteins that bind and probably mediate the attachment of the 5S RNA into the large ribosomal subunit, where it forms part of the central protuberance. The polypeptide is Large ribosomal subunit protein uL18 (Leptospira biflexa serovar Patoc (strain Patoc 1 / Ames)).